A 110-amino-acid chain; its full sequence is Small ubiquitin-related modifier 3 (110 aa).

Glycyl lysine isopeptide (Lys-Gly) (interchain with G-Cter in SUMO2) cross-links involve residues Lys5 and Lys7. Lys11 participates in a covalent cross-link: Glycyl lysine isopeptide (Lys-Gly) (interchain with G-Cter in SUMO); alternate. Lys11 is covalently cross-linked (Glycyl lysine isopeptide (Lys-Gly) (interchain with G-Cter in SUMO2); alternate). Residues 15 to 92 enclose the Ubiquitin-like domain; it reads DHINLKVAGQ…IDVFQQQTGG (78 aa). Polar residues predominate over residues 89 to 101; it reads QTGGTASRASVPT. The disordered stretch occupies residues 89–110; that stretch reads QTGGTASRASVPTPSHFPDICY. Gly92 participates in a covalent cross-link: Glycyl lysine isopeptide (Gly-Lys) (interchain with K-? in acceptor proteins). Positions 93-110 are excised as a propeptide; that stretch reads TASRASVPTPSHFPDICY.

This sequence belongs to the ubiquitin family. SUMO subfamily. As to quaternary structure, interacts with SAE2 and UBE2I. Covalently attached to a number of proteins. Interacts with USP25 (via ts SIM domain); the interaction sumoylates USP25 and inhibits its ubiquitin hydrolyzing activity. Interacts with BMAL1. In terms of processing, polymeric chains can be formed through Lys-11 cross-linking. Post-translationally, cleavage of precursor form by SENP1, SENP2 or SENP5 is necessary for function.

Its subcellular location is the cytoplasm. It is found in the nucleus. It localises to the PML body. In terms of biological role, ubiquitin-like protein which can be covalently attached to target lysines either as a monomer or as a lysine-linked polymer. Does not seem to be involved in protein degradation and may function as an antagonist of ubiquitin in the degradation process. Plays a role in a number of cellular processes such as nuclear transport, DNA replication and repair, mitosis and signal transduction. Covalent attachment to its substrates requires prior activation by the E1 complex SAE1-SAE2 and linkage to the E2 enzyme UBE2I, and can be promoted by an E3 ligase such as PIAS1-4, RANBP2 or CBX4. Plays a role in the regulation of sumoylation status of SETX. The polypeptide is Small ubiquitin-related modifier 3 (Sumo3) (Rattus norvegicus (Rat)).